The chain runs to 602 residues: Myotubularin (602 aa).

The tract at residues 1–32 is disordered; the sequence is MASNSTPKYNSNSLENSLRRSPGDGMNHEQND. A compositionally biased stretch (basic and acidic residues) spans 17-31; the sequence is SLRRSPGDGMNHEQN. The region spanning 28-96 is the GRAM domain; the sequence is HEQNDEIPCL…GVIARIEKMG (69 aa). The region spanning 162-537 is the Myotubularin phosphatase domain; it reads GWAVYDAMTE…RHLELWVNYY (376 aa). A 1,2-diacyl-sn-glycero-3-phospho-(1D-myo-inositol-3,5-bisphosphate) contacts are provided by Asn-287, Asn-312, and Ile-313. Residues Asn-287, Asn-312, and Ile-313 each contribute to the a 1,2-diacyl-sn-glycero-3-phospho-(1D-myo-inositol-3-phosphate) site. Residue Cys-374 is the Phosphocysteine intermediate of the active site. Positions 375, 376, 377, 378, 379, 380, 416, and 420 each coordinate a 1,2-diacyl-sn-glycero-3-phospho-(1D-myo-inositol-3,5-bisphosphate). Ser-375, Asp-376, Gly-377, Trp-378, Asp-379, and Arg-380 together coordinate a 1,2-diacyl-sn-glycero-3-phospho-(1D-myo-inositol-3-phosphate). Arg-420 contributes to the a 1,2-diacyl-sn-glycero-3-phospho-(1D-myo-inositol-3-phosphate) binding site. The tract at residues 574-602 is disordered; it reads QITNSPKMNSSTTSPSSPSQIMPQVHTPF. Residues 583 to 592 show a composition bias toward low complexity; it reads SSTTSPSSPS.

This sequence belongs to the protein-tyrosine phosphatase family. Non-receptor class myotubularin subfamily.

It is found in the cytoplasm. The protein resides in the cell membrane. It localises to the cell projection. The protein localises to the filopodium. Its subcellular location is the ruffle. It is found in the late endosome. The protein resides in the myofibril. It localises to the sarcomere. The catalysed reaction is a 1,2-diacyl-sn-glycero-3-phospho-(1D-myo-inositol-3-phosphate) + H2O = a 1,2-diacyl-sn-glycero-3-phospho-(1D-myo-inositol) + phosphate. The enzyme catalyses a 1,2-diacyl-sn-glycero-3-phospho-(1D-myo-inositol-3,5-bisphosphate) + H2O = a 1,2-diacyl-sn-glycero-3-phospho-(1D-myo-inositol-5-phosphate) + phosphate. It carries out the reaction 1,2-dioctanoyl-sn-glycero-3-phospho-(1-D-myo-inositol-3-phosphate) + H2O = 1,2-dioctanoyl-sn-glycero-3-phospho-(1D-myo-inositol) + phosphate. It catalyses the reaction 1,2-dioctanoyl-sn-glycero-3-phospho-(1D-myo-inositol-3,5-bisphosphate) + H2O = 1,2-dioctanoyl-sn-glycero-3-phospho-(1D-myo-inositol-5-phosphate) + phosphate. The catalysed reaction is 1,2-dihexadecanoyl-sn-glycero-3-phospho-(1D-myo-inositol-3,5-phosphate) + H2O = 1,2-dihexadecanoyl-sn-glycero-3-phospho-(1D-myo-inositol-5-phosphate) + phosphate. Lipid phosphatase which dephosphorylates phosphatidylinositol 3-monophosphate (PI3P) and phosphatidylinositol 3,5-bisphosphate (PI(3,5)P2). The protein is Myotubularin (mtm1) of Xenopus tropicalis (Western clawed frog).